Consider the following 165-residue polypeptide: Transcriptional repressor NrdR (165 aa).

Residues 3 to 34 fold into a zinc finger; that stretch reads CPFCRNPDSRVVDSRMADDGSAIRRRRQCPEC. An ATP-cone domain is found at 46–136; the sequence is LTVIKRSGVG…VYQAFESLED (91 aa).

Belongs to the NrdR family. The cofactor is Zn(2+).

Negatively regulates transcription of bacterial ribonucleotide reductase nrd genes and operons by binding to NrdR-boxes. This is Transcriptional repressor NrdR from Arthrobacter sp. (strain FB24).